The primary structure comprises 79 residues: Translational regulator CsrA (79 aa).

It belongs to the CsrA/RsmA family. As to quaternary structure, homodimer; the beta-strands of each monomer intercalate to form a hydrophobic core, while the alpha-helices form wings that extend away from the core.

The protein resides in the cytoplasm. Its function is as follows. A translational regulator that binds mRNA to regulate translation initiation and/or mRNA stability. Usually binds in the 5'-UTR at or near the Shine-Dalgarno sequence preventing ribosome-binding, thus repressing translation. Its main target seems to be the major flagellin gene, while its function is anatagonized by FliW. The polypeptide is Translational regulator CsrA (Shouchella clausii (strain KSM-K16) (Alkalihalobacillus clausii)).